Reading from the N-terminus, the 396-residue chain is MTYITATYQLGTTDQLPKRAEQIALGLTVGSWTDLNHLEQQQLESFKGQVVHTEEHDGKGYITIRYPEHNVSRDFSAILTTVFGKLSLDGQIKLTDLQLPASFTTDFPGAKFGIEGVRQLIQVHDRPLLMSIFKGVIGRDLTFLREQLEAQLAGGIDLVKDDEILYDNPLTPALDRARIGRDVLNAHYEKTGKRALYAITLSGSVFGLKDQTKRLIEAGATAFLLNTFTYGLDVLRELAADPDISVPIFNHPALSGALIASPEYGIAAPVLLGTLPRLAGADLTLFPSPYGNVALAKDLARGIAVEATRIGETKTILPVPSAGIHPGLVAQLVHDFGTDSVINAGGGVHGHPQGAAAGVLAFRQALDAALAGESLTSAATRQEELRVALDAWGITK.

Lysine 85 acts as the Proton acceptor in catalysis. Residues lysine 134, 160 to 163, histidine 251, glycine 323, and 345 to 346 contribute to the substrate site; these read KDDE and GG. Positions 160, 162, and 163 each coordinate Mg(2+). Position 160 is an N6-carboxylysine (lysine 160).

Belongs to the RuBisCO large chain family. Type IV subfamily. Homodimer. It depends on Mg(2+) as a cofactor.

The catalysed reaction is 5-methylsulfanyl-2,3-dioxopentyl phosphate = 2-hydroxy-5-methylsulfanyl-3-oxopent-1-enyl phosphate. The protein operates within amino-acid biosynthesis; L-methionine biosynthesis via salvage pathway; L-methionine from S-methyl-5-thio-alpha-D-ribose 1-phosphate: step 3/6. Functionally, catalyzes the enolization of 2,3-diketo-5-methylthiopentyl-1-phosphate (DK-MTP-1-P) into 2-hydroxy-3-keto-5-methylthiopentenyl-1-phosphate (HK-MTPenyl-1-P). The chain is 2,3-diketo-5-methylthiopentyl-1-phosphate enolase from Exiguobacterium sibiricum (strain DSM 17290 / CCUG 55495 / CIP 109462 / JCM 13490 / 255-15).